We begin with the raw amino-acid sequence, 437 residues long: MAEAEEDCHSEAVREGDDDDENESPAETDLQAQLQRFRAQWMFELAPGGGSGNLESRPCRAARGSLLRAADTRGKQELAKEEKARELFLKAVEEEQNGALYEAIKFYRRAMQLVPDIEFKITYTRSPDGDGVGNSYIEDTDDDSKMADLLSYFQQQLTFQESVLKLCQPELESSQTHISALPMEVLMYVFRWVVSSDLDLRSLEQLSQVCRGFYICARDPEIWRLACLKVWGRSCIKLVPYTSWREMFLERPRVRFDGVYISKTTYIRQGEQSLDGFYRAWHQVEYYRYVRFFPDGHVMMLTTPEEPQSIVPRLRTRNTRTDAILLGHYRLSQDTDNQTKVFAVITKKKEEKALDHKYRYFRRAPVQEADQNFHVGLQLCSSGHQSFNKLIWIHHSCHITYKSTGETAVTAFEIDKMYTPLLFARVRSYTAFSERPL.

Residues 1-29 form a disordered region; the sequence is MAEAEEDCHSEAVREGDDDDENESPAETD. Over residues 16–26 the composition is skewed to acidic residues; that stretch reads GDDDDENESPA. The stretch at 84-117 is one TPR repeat; it reads ARELFLKAVEEEQNGALYEAIKFYRRAMQLVPDI. Residue Ser-126 is modified to Phosphoserine. Residues 175 to 226 form the F-box domain; sequence QTHISALPMEVLMYVFRWVVSSDLDLRSLEQLSQVCRGFYICARDPEIWRLA.

As to quaternary structure, part of the SCF (SKP1-CUL1-F-box) E3 ubiquitin-protein ligase complex SCF(FBXO9) composed of CUL1, SKP1, RBX1 and FBXO9. Interacts with TTI1 and TELO2; when TTI1 and TELO2 are phosphorylated by CK2.

It is found in the cytoplasm. The protein operates within protein modification; protein ubiquitination. Functionally, substrate recognition component of a SCF (SKP1-CUL1-F-box protein) E3 ubiquitin-protein ligase complex which mediates the ubiquitination and subsequent proteasomal degradation of target proteins and plays a role in several biological processes such as cell cycle, cell proliferation, or maintenance of chromosome stability. Ubiquitinates mTORC1-bound TTI1 and TELO2 when they are phosphorylated by CK2 following growth factor deprivation, leading to their degradation. In contrast, does not mediate ubiquitination of TTI1 and TELO2 when they are part of the mTORC2 complex. As a consequence, mTORC1 is inactivated to restrain cell growth and protein translation, while mTORC2 is the activated due to the relief of feedback inhibition by mTORC1. Plays a role in maintaining epithelial cell survival by regulating the turn-over of chromatin modulator PRMT4 through ubiquitination and degradation by the proteasomal pathway. Also regulates PPARgamma stability by facilitating PPARgamma/PPARG ubiquitination and thereby plays a role in adipocyte differentiation. The protein is F-box only protein 9 (FBXO9) of Bos taurus (Bovine).